The sequence spans 331 residues: Ketol-acid reductoisomerase (NADP(+)) (331 aa).

The KARI N-terminal Rossmann domain occupies A2–T182. NADP(+)-binding positions include Y25 to Q28, S51, S53, and D83 to Q86. H108 is a catalytic residue. Residue G134 coordinates NADP(+). The KARI C-terminal knotted domain occupies N183–L328. Residues D191, E195, E227, and E231 each coordinate Mg(2+). S252 contributes to the substrate binding site.

It belongs to the ketol-acid reductoisomerase family. It depends on Mg(2+) as a cofactor.

The enzyme catalyses (2R)-2,3-dihydroxy-3-methylbutanoate + NADP(+) = (2S)-2-acetolactate + NADPH + H(+). It catalyses the reaction (2R,3R)-2,3-dihydroxy-3-methylpentanoate + NADP(+) = (S)-2-ethyl-2-hydroxy-3-oxobutanoate + NADPH + H(+). It functions in the pathway amino-acid biosynthesis; L-isoleucine biosynthesis; L-isoleucine from 2-oxobutanoate: step 2/4. Its pathway is amino-acid biosynthesis; L-valine biosynthesis; L-valine from pyruvate: step 2/4. In terms of biological role, involved in the biosynthesis of branched-chain amino acids (BCAA). Catalyzes an alkyl-migration followed by a ketol-acid reduction of (S)-2-acetolactate (S2AL) to yield (R)-2,3-dihydroxy-isovalerate. In the isomerase reaction, S2AL is rearranged via a Mg-dependent methyl migration to produce 3-hydroxy-3-methyl-2-ketobutyrate (HMKB). In the reductase reaction, this 2-ketoacid undergoes a metal-dependent reduction by NADPH to yield (R)-2,3-dihydroxy-isovalerate. The sequence is that of Ketol-acid reductoisomerase (NADP(+)) from Synechococcus sp. (strain CC9902).